The chain runs to 190 residues: Large ribosomal subunit protein uL10 (190 aa).

Belongs to the universal ribosomal protein uL10 family. Part of the ribosomal stalk of the 50S ribosomal subunit. The N-terminus interacts with L11 and the large rRNA to form the base of the stalk. The C-terminus forms an elongated spine to which L12 dimers bind in a sequential fashion forming a multimeric L10(L12)X complex.

Its function is as follows. Forms part of the ribosomal stalk, playing a central role in the interaction of the ribosome with GTP-bound translation factors. This chain is Large ribosomal subunit protein uL10, found in Trichodesmium erythraeum (strain IMS101).